The sequence spans 487 residues: Cobyric acid synthase (487 aa).

The GATase cobBQ-type domain occupies V248 to S435. Residue C329 is the Nucleophile of the active site. H427 is an active-site residue.

This sequence belongs to the CobB/CobQ family. CobQ subfamily.

The protein operates within cofactor biosynthesis; adenosylcobalamin biosynthesis. Functionally, catalyzes amidations at positions B, D, E, and G on adenosylcobyrinic A,C-diamide. NH(2) groups are provided by glutamine, and one molecule of ATP is hydrogenolyzed for each amidation. The polypeptide is Cobyric acid synthase (Pseudomonas entomophila (strain L48)).